The primary structure comprises 129 residues: Large ribosomal subunit protein bL19 (129 aa).

Its function is as follows. This protein is located at the 30S-50S ribosomal subunit interface and may play a role in the structure and function of the aminoacyl-tRNA binding site. The polypeptide is Large ribosomal subunit protein bL19 (Rhodopseudomonas palustris (strain ATCC BAA-98 / CGA009)).